The primary structure comprises 249 residues: tRNA pseudouridine synthase A (249 aa).

Residue D52 is the Nucleophile of the active site. Substrate is bound at residue Y111.

Belongs to the tRNA pseudouridine synthase TruA family. In terms of assembly, homodimer.

The enzyme catalyses uridine(38/39/40) in tRNA = pseudouridine(38/39/40) in tRNA. In terms of biological role, formation of pseudouridine at positions 38, 39 and 40 in the anticodon stem and loop of transfer RNAs. This chain is tRNA pseudouridine synthase A, found in Caulobacter sp. (strain K31).